The chain runs to 376 residues: Inactive 2'-5'-oligoadenylate synthase 1B (376 aa).

The Cytoplasmic portion of the chain corresponds to 1 to 351 (MEQDLRSIPA…VPTEVGVPMK (351 aa)). Residues 352–370 (YLLCRIFWLLFWSLFHFIF) form a helical; Anchor for type IV membrane protein membrane-spanning segment. The Extracellular segment spans residues 371 to 376 (GKTSSG).

Belongs to the 2-5A synthase family. Interacts with OSBPL1A and ABCF3. Highly expressed in lung, spleen and thymus. Also detected at lower levels in heart, kidney, liver, lung, skeletal muscle, testes, uterus and ovaries.

It is found in the endoplasmic reticulum membrane. Its function is as follows. Does not have 2'-5'-OAS activity, but can bind double-stranded RNA. The full-length protein displays antiviral activity against flaviviruses such as west Nile virus (WNV) via an alternative antiviral pathway independent of RNase L. The truncated form of the protein lacks antiviral activity. This chain is Inactive 2'-5'-oligoadenylate synthase 1B (Oas1b), found in Mus musculus (Mouse).